A 933-amino-acid chain; its full sequence is MTELKAKGPRAPHVAGGPPSPEVGSPLLCRPAAGPYPGSQTSDTLPEVSAIPISLDGLLFPRPCQGQDPSDEKTQDQQSLSDVEGAYSRAEATRGAGGSSSSPPEKDSGLLDSVLETLLAPSGPGQSQPSPPACEVTSSWCLFGPELPEDPPAAPATQGVLSPLMSRSGGKAGDSSGTAAAHKVLPRGLSPSRQLLLPVSGSPHWSGAPVKPSPQPAAVEVEEEDGSESEESAGPLLKGKPRALGGAAAGGGAAAVPPGAAAGGVALVPKEDSRFSAPRVALVEQDAPMAPGRSPLATTVMDFIHVPILPLNHALLAARTRQLLEDESYDGGAGAASAFAPPRSSPSASSTPVAVGDFPDCAYPPDAEPKDDAYPLYSDFQPPALKIKEEEEGAEASARSPRSYLVAGANPAAFPDFPLGPPPPLPPRAPPSRPGEAAVTAAPASASVSSASSSGSTLECILYKAEGAPPQQGPFAPPPCKAPGASGCLLPRDGLPSTSASAAAAGAAPALYPALGLNGLPQLGYQAAVLKEGLPQVYPPYLNYLRPDSEASQSPQYSFESLPQKICLICGDEASGCHYGVLTCGSCKVFFKRAMEGQHNYLCAGRNDCIVDKIRRKNCPACRLRKCCQAGMVLGGRKFKKFNKVRVVRALDAVALPQPVGIPNESQALSQRFTFSPGQDIQLIPPLINLLMSIEPDVIYAGHDNTKPDTSSSLLTSLNQLGERQLLSVVKWSKSLPGFRNLHIDDQITLIQYSWMSLMVFGLGWRSYKHVSGQMLYFAPDLILNEQRMKESSFYSLCLTMWQIPQEFVKLQVSQEEFLCMKVLLLLNTIPLEGLRSQTQFEEMRSSYIRELIKAIGLRQKGVVSSSQRFYQLTKLLDNLHDLVKQLHLYCLNTFIQSRALSVEFPEMMSEVIAAQLPKILAGMVKPLLFHKK.

The segment at M1–L164 is AF3; mediates transcriptional activation. Positions M1–V256 are disordered. The tract at residues M1–I566 is modulating, Pro-Rich. The residue at position 20 (S20) is a Phosphoserine. The LXXL motif 1 motif lies at L55–L59. The residue at position 81 (S81) is a Phosphoserine. The LXXL motif 2 motif lies at L115–L119. S130 and S162 each carry phosphoserine. Positions M165–H305 are mediates transcriptional transrepression. Residues K183 to R187 carry the Nuclear localization signal motif. 2 positions are modified to phosphoserine: S190 and S213. Positions E220–E231 are enriched in acidic residues. Low complexity predominate over residues S232 to G246. S294 carries the phosphoserine; by MAPK1 modification. The interval G331 to S378 is disordered. Positions A335 to S350 are enriched in low complexity. A Phosphoserine; by MAPK modification is found at S345. A Glycyl lysine isopeptide (Lys-Gly) (interchain with G-Cter in SUMO); alternate cross-link involves residue K388. Residue K388 forms a Glycyl lysine isopeptide (Lys-Gly) (interchain with G-Cter in ubiquitin); alternate linkage. S400 is subject to Phosphoserine; by CDK2. The tract at residues P415–S452 is disordered. Over residues P418–R433 the composition is skewed to pro residues. Positions P434–S452 are enriched in low complexity. The segment at S456–R546 is AF1; mediates transcriptional activation. A Glycyl lysine isopeptide (Lys-Gly) (interchain with G-Cter in SUMO) cross-link involves residue K531. 2 consecutive NR C4-type zinc fingers follow at residues C567–C587 and C603–C627. Residues C567–F639 constitute a DNA-binding region (nuclear receptor). Residue S676 is modified to Phosphoserine. The NR LBD domain occupies Q679–I913. Residues L687–K933 form an AF2; mediates transcriptional activation region. A progesterone-binding site is contributed by R766.

It belongs to the nuclear hormone receptor family. As to quaternary structure, interacts with SMARD1 and UNC45A. Interacts with CUEDC2; the interaction promotes ubiquitination, decreases sumoylation, and represses transcriptional activity. Interacts with PIAS3; the interaction promotes sumoylation of PR in a hormone-dependent manner, inhibits DNA-binding, and alters nuclear export. Interacts with SP1; the interaction requires ligand-induced phosphorylation on Ser-345 by ERK1/2-MAPK. Interacts with PRMT2. Interacts with NCOA2 and NCOA1. Interacts with KLF9. Interacts with GTF2B. In terms of processing, phosphorylated on multiple serine sites. Several of these sites are hormone-dependent. Phosphorylation on Ser-294 is highly hormone-dependent and modulates ubiquitination and sumoylation on Lys-388. Phosphorylation on Ser-102 and Ser-345 also requires induction by hormone. Basal phosphorylation on Ser-81, Ser-162, Ser-190 and Ser-400 is increased in response to progesterone and can be phosphorylated in vitro by the CDK2-A1 complex. Increased levels of phosphorylation on Ser-400 also in the presence of EGF, heregulin, IGF, PMA and FBS. Phosphorylation at this site by CDK2 is ligand-independent, and increases nuclear translocation and transcriptional activity. Phosphorylation at Ser-162 and Ser-294, but not at Ser-190, is impaired during the G(2)/M phase of the cell cycle. Phosphorylation on Ser-345 by ERK1/2 MAPK is required for interaction with SP1. Post-translationally, sumoylation is hormone-dependent and represses transcriptional activity. Sumoylation on all three sites is enhanced by PIAS3. Desumoylated by SENP1. Sumoylation on Lys-388, the main site of sumoylation, is repressed by ubiquitination on the same site, and modulated by phosphorylation at Ser-294. Ubiquitination is hormone-dependent and represses sumoylation on the same site. Promoted by MAPK-mediated phosphorylation on Ser-294. Ubiquitinated by UBR5, leading to its degradation: UBR5 specifically recognizes and binds ligand-bound PGR when it is not associated with coactivators (NCOAs). In presence of NCOAs, the UBR5-degron is not accessible, preventing its ubiquitination and degradation. In terms of processing, palmitoylated by ZDHHC7 and ZDHHC21. Palmitoylation is required for plasma membrane targeting and for rapid intracellular signaling via ERK and AKT kinases and cAMP generation.

It localises to the nucleus. Its subcellular location is the cytoplasm. In terms of biological role, the steroid hormones and their receptors are involved in the regulation of eukaryotic gene expression and affect cellular proliferation and differentiation in target tissues. Transcriptional activator of several progesteron-dependent promoters in a variety of cell types. Involved in activation of SRC-dependent MAPK signaling on hormone stimulation. This is Progesterone receptor (PGR) from Gorilla gorilla gorilla (Western lowland gorilla).